The chain runs to 248 residues: 2,3-dihydro-2,3-dihydroxybenzoate dehydrogenase (248 aa).

9–33 provides a ligand contact to NAD(+); the sequence is WVTGAGKGIGYATALAFVEAGAKVT. Ser131 provides a ligand contact to substrate. The Proton acceptor role is filled by Tyr144.

Belongs to the short-chain dehydrogenases/reductases (SDR) family. In terms of assembly, homotetramer; dimer of dimers. EntA and EntE interact together.

It catalyses the reaction (2S,3S)-2,3-dihydroxy-2,3-dihydrobenzoate + NAD(+) = 2,3-dihydroxybenzoate + NADH + H(+). Its pathway is siderophore biosynthesis; enterobactin biosynthesis. Its activity is regulated as follows. Inhibited by cis-2-hydroxy-3-cyclohexen-1-carboxylate, cis-2-hydroxycyclohexane-1-carboxylate and trans-2-hydroxycyclohexane-1-carboxylate. Functionally, involved in the biosynthesis of the siderophore enterobactin (enterochelin), which is a macrocyclic trimeric lactone of N-(2,3-dihydroxybenzoyl)-serine. Catalyzes the reversible NAD-dependent oxidation of the C3-hydroxyl group of 2,3-dihydro-2,3-dihydroxybenzoate (2,3-diDHB), producing the transient intermediate 2-hydroxy-3-oxo-4,6-cyclohexadiene-1-carboxylate, which undergoes rapid aromatization to the final product, 2,3-dihydroxybenzoate (2,3-DHB). Only the compounds with a C3-hydroxyl group such as methyl 2,3-dihydro-2,3-dihydroxybenzoate, methyl-3-hydroxy-1,4-cyclohexadiene-1-carboxylate, trans-3-hydroxy-2-cyclohexene-1-carboxylate, cis-3-hydroxy-4-cyclohexene-1-carboxylate, cis-3-hydroxycyclohexane-1-carboxylic acid are oxidized to the corresponding ketone products. The stereospecificity of the C3 allylic alcohol group oxidation is 3R in a 1R,3R dihydro substrate. It can also increase the DHB-AMP ligase activity of EntE by interaction EntE. The sequence is that of 2,3-dihydro-2,3-dihydroxybenzoate dehydrogenase from Escherichia coli (strain K12).